The primary structure comprises 279 residues: Large ribosomal subunit protein uL2 (279 aa).

Positions 223-279 are disordered; that stretch reads TVRGSAMNPNDHPHGGGEGRSPVGMDAPRTPWGKRHMGVKTRNNKKSSTSMIVRRRK. Basic residues predominate over residues 254 to 267; the sequence is WGKRHMGVKTRNNK.

It belongs to the universal ribosomal protein uL2 family. Part of the 50S ribosomal subunit. Forms a bridge to the 30S subunit in the 70S ribosome.

Its function is as follows. One of the primary rRNA binding proteins. Required for association of the 30S and 50S subunits to form the 70S ribosome, for tRNA binding and peptide bond formation. It has been suggested to have peptidyltransferase activity; this is somewhat controversial. Makes several contacts with the 16S rRNA in the 70S ribosome. The chain is Large ribosomal subunit protein uL2 from Ureaplasma parvum serovar 3 (strain ATCC 27815 / 27 / NCTC 11736).